We begin with the raw amino-acid sequence, 366 residues long: UDP-N-acetylglucosamine--N-acetylmuramyl-(pentapeptide) pyrophosphoryl-undecaprenol N-acetylglucosamine transferase (366 aa).

Residues 14–16 (TGG), N128, R169, S201, I251, and Q296 each bind UDP-N-acetyl-alpha-D-glucosamine.

This sequence belongs to the glycosyltransferase 28 family. MurG subfamily.

Its subcellular location is the cell inner membrane. It catalyses the reaction di-trans,octa-cis-undecaprenyl diphospho-N-acetyl-alpha-D-muramoyl-L-alanyl-D-glutamyl-meso-2,6-diaminopimeloyl-D-alanyl-D-alanine + UDP-N-acetyl-alpha-D-glucosamine = di-trans,octa-cis-undecaprenyl diphospho-[N-acetyl-alpha-D-glucosaminyl-(1-&gt;4)]-N-acetyl-alpha-D-muramoyl-L-alanyl-D-glutamyl-meso-2,6-diaminopimeloyl-D-alanyl-D-alanine + UDP + H(+). Its pathway is cell wall biogenesis; peptidoglycan biosynthesis. Cell wall formation. Catalyzes the transfer of a GlcNAc subunit on undecaprenyl-pyrophosphoryl-MurNAc-pentapeptide (lipid intermediate I) to form undecaprenyl-pyrophosphoryl-MurNAc-(pentapeptide)GlcNAc (lipid intermediate II). This chain is UDP-N-acetylglucosamine--N-acetylmuramyl-(pentapeptide) pyrophosphoryl-undecaprenol N-acetylglucosamine transferase, found in Christiangramia forsetii (strain DSM 17595 / CGMCC 1.15422 / KT0803) (Gramella forsetii).